The following is a 260-amino-acid chain: Thiazole synthase (260 aa).

Lysine 96 serves as the catalytic Schiff-base intermediate with DXP. 1-deoxy-D-xylulose 5-phosphate is bound by residues glycine 157, 183–184 (AG), and 205–206 (AS).

This sequence belongs to the ThiG family. As to quaternary structure, homotetramer. Forms heterodimers with either ThiH or ThiS.

The protein localises to the cytoplasm. The enzyme catalyses [ThiS sulfur-carrier protein]-C-terminal-Gly-aminoethanethioate + 2-iminoacetate + 1-deoxy-D-xylulose 5-phosphate = [ThiS sulfur-carrier protein]-C-terminal Gly-Gly + 2-[(2R,5Z)-2-carboxy-4-methylthiazol-5(2H)-ylidene]ethyl phosphate + 2 H2O + H(+). The protein operates within cofactor biosynthesis; thiamine diphosphate biosynthesis. Its function is as follows. Catalyzes the rearrangement of 1-deoxy-D-xylulose 5-phosphate (DXP) to produce the thiazole phosphate moiety of thiamine. Sulfur is provided by the thiocarboxylate moiety of the carrier protein ThiS. In vitro, sulfur can be provided by H(2)S. The polypeptide is Thiazole synthase (Corynebacterium glutamicum (strain ATCC 13032 / DSM 20300 / JCM 1318 / BCRC 11384 / CCUG 27702 / LMG 3730 / NBRC 12168 / NCIMB 10025 / NRRL B-2784 / 534)).